A 395-amino-acid chain; its full sequence is MVMKREVVGYTTMSEHLIDTQLTRSPFFFASANQSMLGCGVAHAFQQAIPFAELANQAKQLLQQAKRDECDNPLLFGIVPFDPKTPTRFMIPRTLYVSSSPRLNRPAHLTRQVAKLISSPSGEQYKQGVSHLLNMFHHSGLSKVVLSRAIEIATEQEIALPTLLRSLLAINHHGYTFAASLDEQRKLIGASPELLVAKRGNYLISNPLAGSRPRSQDAQENAQRRASLLNTAKDLHEHGLVVEEVERIMSRYCRNLYTPMVPSVIETETMLHLSTLLEGQVSDPEVCALQVAADLHPTPAVCGFPRESAYQAIRELEEFDRGYFTGMVGWCDARGNGEWVVTIRCAEVGSHQMKLFAGAGIVDESLPQSELEETGAKMKTILAAAGIELNDVLTA.

It belongs to the isochorismate synthase family.

It carries out the reaction chorismate = isochorismate. The protein operates within siderophore biosynthesis; vibriobactin biosynthesis. In Vibrio cholerae serotype O1 (strain ATCC 39315 / El Tor Inaba N16961), this protein is Vibriobactin-specific isochorismate synthase (vibC).